The chain runs to 318 residues: NADH-ubiquinone oxidoreductase chain 1 (318 aa).

Helical transmembrane passes span 3-23, 69-89, 102-122, 144-164, 171-191, 222-242, 253-273, and 294-314; these read LINL…LTLL, MLFI…WTPL, MLFI…SGWA, VTLA…TLLS, YIWL…STLA, LFFL…IILF, ELYT…FLWI, and LPLT…LAGI.

This sequence belongs to the complex I subunit 1 family. In terms of assembly, core subunit of respiratory chain NADH dehydrogenase (Complex I) which is composed of 45 different subunits.

It is found in the mitochondrion inner membrane. The enzyme catalyses a ubiquinone + NADH + 5 H(+)(in) = a ubiquinol + NAD(+) + 4 H(+)(out). Its function is as follows. Core subunit of the mitochondrial membrane respiratory chain NADH dehydrogenase (Complex I) which catalyzes electron transfer from NADH through the respiratory chain, using ubiquinone as an electron acceptor. Essential for the catalytic activity and assembly of complex I. The protein is NADH-ubiquinone oxidoreductase chain 1 (MT-ND1) of Murina suilla (Brown tube-nosed bat).